A 374-amino-acid polypeptide reads, in one-letter code: DNA replication and repair protein RecF (374 aa).

30 to 37 (GENAQGKT) provides a ligand contact to ATP.

The protein belongs to the RecF family.

Its subcellular location is the cytoplasm. Functionally, the RecF protein is involved in DNA metabolism; it is required for DNA replication and normal SOS inducibility. RecF binds preferentially to single-stranded, linear DNA. It also seems to bind ATP. The polypeptide is DNA replication and repair protein RecF (Lactiplantibacillus plantarum (strain ATCC BAA-793 / NCIMB 8826 / WCFS1) (Lactobacillus plantarum)).